An 85-amino-acid polypeptide reads, in one-letter code: Phosphocarrier protein HPr (85 aa).

The HPr domain occupies 1-85 (MYEKQVEITA…HLVALMDQLH (85 aa)). The active-site Pros-phosphohistidine intermediate is histidine 15.

It belongs to the HPr family.

The protein localises to the cytoplasm. In terms of biological role, general (non sugar-specific) component of the phosphoenolpyruvate-dependent sugar phosphotransferase system (sugar PTS). This major carbohydrate active-transport system catalyzes the phosphorylation of incoming sugar substrates concomitantly with their translocation across the cell membrane. The phosphoryl group from phosphoenolpyruvate (PEP) is transferred to the phosphoryl carrier protein HPr by enzyme I. Phospho-HPr then transfers it to the PTS EIIA domain. The chain is Phosphocarrier protein HPr (ptsH) from Vibrio cholerae serotype O1 (strain ATCC 39315 / El Tor Inaba N16961).